Here is a 464-residue protein sequence, read N- to C-terminus: Protein FAM90A10 (464 aa).

3 disordered regions span residues Met-1–Leu-42, Val-69–Ala-373, and His-415–Pro-437. Basic and acidic residues-rich tracts occupy residues Gly-74 to Gly-89 and Asn-97 to Arg-114. Positions Leu-180–Leu-197 are enriched in low complexity.

Belongs to the FAM90 family.

This chain is Protein FAM90A10 (FAM90A10), found in Homo sapiens (Human).